The primary structure comprises 414 residues: 2,3-diketo-5-methylthiopentyl-1-phosphate enolase (414 aa).

Residue Lys-99 is the Proton acceptor of the active site. Residues Lys-148, Lys-174–Glu-177, His-265, Gly-338, and Gly-360–Gly-361 each bind substrate. Positions 174, 176, and 177 each coordinate Mg(2+). Lys-174 carries the N6-carboxylysine modification.

The protein belongs to the RuBisCO large chain family. Type IV subfamily. Homodimer. Mg(2+) is required as a cofactor.

It carries out the reaction 5-methylsulfanyl-2,3-dioxopentyl phosphate = 2-hydroxy-5-methylsulfanyl-3-oxopent-1-enyl phosphate. Its pathway is amino-acid biosynthesis; L-methionine biosynthesis via salvage pathway; L-methionine from S-methyl-5-thio-alpha-D-ribose 1-phosphate: step 3/6. Its function is as follows. Catalyzes the enolization of 2,3-diketo-5-methylthiopentyl-1-phosphate (DK-MTP-1-P) into 2-hydroxy-3-keto-5-methylthiopentenyl-1-phosphate (HK-MTPenyl-1-P). The protein is 2,3-diketo-5-methylthiopentyl-1-phosphate enolase of Bacillus cereus (strain ATCC 14579 / DSM 31 / CCUG 7414 / JCM 2152 / NBRC 15305 / NCIMB 9373 / NCTC 2599 / NRRL B-3711).